The sequence spans 576 residues: K(+)/H(+) antiporter NhaP2 (576 aa).

13 consecutive transmembrane segments (helical) span residues 6–26, 34–54, 58–78, 87–107, 109–129, 163–183, 185–205, 219–239, 242–262, 271–291, 299–319, 335–355, and 359–379; these read INSF…LSPM, ILLI…GGIL, YSTA…DGGM, VALW…TSIT, MMAA…GAIV, PMAV…DTEM, FSFM…LGLG, LADG…YAAS, LGGS…NKPT, VLDG…GLLL, ILIP…PVAV, WFIS…VFPM, and LPGA…SLLV. The 82-residue stretch at 405-486 folds into the RCK C-terminal domain; that stretch reads SGVEIYPSSE…LEALSNLFSQ (82 aa).

It belongs to the monovalent cation:proton antiporter 1 (CPA1) transporter (TC 2.A.36) family. NhaP2 subfamily.

It localises to the cell inner membrane. It catalyses the reaction K(+)(in) + H(+)(out) = K(+)(out) + H(+)(in). Functionally, k(+)/H(+) antiporter that extrudes potassium in exchange for external protons and maintains the internal concentration of potassium under toxic levels. The chain is K(+)/H(+) antiporter NhaP2 from Shewanella baltica (strain OS155 / ATCC BAA-1091).